Here is a 129-residue protein sequence, read N- to C-terminus: Antileukoproteinase (129 aa).

The signal sequence occupies residues 1-22 (GRGLLPFVLLALGIXAPWAVEG). 2 WAP domains span residues 25–73 (NALK…LNPV) and 79–127 (VKVK…LTPV). Intrachain disulfides connect Cys-32-Cys-61, Cys-40-Cys-65, Cys-48-Cys-60, Cys-54-Cys-69, Cys-86-Cys-115, Cys-93-Cys-119, Cys-102-Cys-114, and Cys-108-Cys-123. Residues 81 to 129 (VKPGKCPVVYGQCMMLNPPNHCKTDSQCLGDLKCCKSMCGKVCLTPVKA) are elastase inhibitory domain.

In terms of assembly, interacts with GRN; interaction protects progranulin from proteolysis. In terms of tissue distribution, found in pregnant endometrium and myometrium, placenta, allantoic fluids, fetal cord blood, and fetal liver. Also found in uterus and lung.

The protein localises to the secreted. In terms of biological role, acid-stable proteinase inhibitor with strong affinities for trypsin, chymotrypsin, elastase, and cathepsin G. Modulates the inflammatory and immune responses after bacterial infection, and after infection by the intracellular parasite L.major. Down-regulates responses to bacterial lipopolysaccharide (LPS). Plays a role in regulating the activation of NF-kappa-B and inflammatory responses. Has antimicrobial activity against mycobacteria, but not against salmonella. Contributes to normal resistance against infection by M.tuberculosis. Required for normal resistance to infection by L.major. Required for normal wound healing, probably by preventing tissue damage by limiting protease activity. Together with ELANE, required for normal differentiation and proliferation of bone marrow myeloid cells. In Sus scrofa (Pig), this protein is Antileukoproteinase (SLPI).